The primary structure comprises 94 residues: Integration host factor subunit beta (94 aa).

This sequence belongs to the bacterial histone-like protein family. In terms of assembly, heterodimer of an alpha and a beta chain.

Functionally, this protein is one of the two subunits of integration host factor, a specific DNA-binding protein that functions in genetic recombination as well as in transcriptional and translational control. The protein is Integration host factor subunit beta of Edwardsiella ictaluri (strain 93-146).